Here is an 89-residue protein sequence, read N- to C-terminus: Small ribosomal subunit protein uS15 (89 aa).

It belongs to the universal ribosomal protein uS15 family. Part of the 30S ribosomal subunit. Forms a bridge to the 50S subunit in the 70S ribosome, contacting the 23S rRNA.

One of the primary rRNA binding proteins, it binds directly to 16S rRNA where it helps nucleate assembly of the platform of the 30S subunit by binding and bridging several RNA helices of the 16S rRNA. In terms of biological role, forms an intersubunit bridge (bridge B4) with the 23S rRNA of the 50S subunit in the ribosome. This is Small ribosomal subunit protein uS15 from Acaryochloris marina (strain MBIC 11017).